The chain runs to 115 residues: Large ribosomal subunit protein bL19 (115 aa).

The protein belongs to the bacterial ribosomal protein bL19 family.

In terms of biological role, this protein is located at the 30S-50S ribosomal subunit interface and may play a role in the structure and function of the aminoacyl-tRNA binding site. This chain is Large ribosomal subunit protein bL19, found in Tolumonas auensis (strain DSM 9187 / NBRC 110442 / TA 4).